Consider the following 363-residue polypeptide: 3-isopropylmalate dehydrogenase (363 aa).

NAD(+) is bound at residue 78–91 (GPKWENLPPESQPE). R99, R109, R138, and D227 together coordinate substrate. D227, D251, and D255 together coordinate Mg(2+). 285–297 (GSAPDIAGKNIAN) is a binding site for NAD(+).

It belongs to the isocitrate and isopropylmalate dehydrogenases family. LeuB type 1 subfamily. As to quaternary structure, homodimer. It depends on Mg(2+) as a cofactor. The cofactor is Mn(2+).

The protein resides in the cytoplasm. It carries out the reaction (2R,3S)-3-isopropylmalate + NAD(+) = 4-methyl-2-oxopentanoate + CO2 + NADH. Its pathway is amino-acid biosynthesis; L-leucine biosynthesis; L-leucine from 3-methyl-2-oxobutanoate: step 3/4. Its function is as follows. Catalyzes the oxidation of 3-carboxy-2-hydroxy-4-methylpentanoate (3-isopropylmalate) to 3-carboxy-4-methyl-2-oxopentanoate. The product decarboxylates to 4-methyl-2 oxopentanoate. This Salmonella paratyphi A (strain ATCC 9150 / SARB42) protein is 3-isopropylmalate dehydrogenase.